Consider the following 148-residue polypeptide: Large ribosomal subunit protein bL9 (148 aa).

Belongs to the bacterial ribosomal protein bL9 family.

In terms of biological role, binds to the 23S rRNA. The sequence is that of Large ribosomal subunit protein bL9 from Salinispora tropica (strain ATCC BAA-916 / DSM 44818 / JCM 13857 / NBRC 105044 / CNB-440).